Consider the following 324-residue polypeptide: UDP-N-acetylenolpyruvoylglucosamine reductase (324 aa).

The FAD-binding PCMH-type domain occupies 38 to 217 (AGGLAELMFQ…IRAEMDAVRQ (180 aa)). Arg183 is a catalytic residue. The active-site Proton donor is Ser232. The active site involves Glu302.

It belongs to the MurB family. The cofactor is FAD.

Its subcellular location is the cytoplasm. The catalysed reaction is UDP-N-acetyl-alpha-D-muramate + NADP(+) = UDP-N-acetyl-3-O-(1-carboxyvinyl)-alpha-D-glucosamine + NADPH + H(+). The protein operates within cell wall biogenesis; peptidoglycan biosynthesis. Functionally, cell wall formation. The protein is UDP-N-acetylenolpyruvoylglucosamine reductase of Allorhizobium ampelinum (strain ATCC BAA-846 / DSM 112012 / S4) (Agrobacterium vitis (strain S4)).